A 642-amino-acid polypeptide reads, in one-letter code: MSYQVLARKWRPQTFADVVGQEHVLTALANGLSLGRIHHAYLFSGTRGVGKTSIARLLAKGLNCETGITATPCGVCDNCREIEQGRFVDLIEIDAASRTKVEDTRDLLDNVQYAPARGRFKVYLIDEVHMLSRHSFNALLKTLEEPPAHVKFLLATTDPQKLPVTILSRCLQFHLKALDVEQIRHQLEHILNEEHIAHEPRALQLLSRAADGSLRDALSLTDQAIASGDGQVSTQAVSAMLGTLDDDQALSLVEAVVDANGERVMSLINEAAARGIEWEALLVEMLSLLHRIAMVQLSPAALGSDMAAIEQRMRELARTVPPGDLQLYYQTLLIGRKELPWAPDRRMGVEMTLLRALAFHPRMPLPEPETPRQSFAPVAPTAVMTPPQLQQPSAPAPQTSPAPLPASTSQVLAARNQLQRAQGVTKTKKSEPAAASRARPVNNSALERLASVSERVQARPAPSALETAPVKKEAYRWKATTPVVQTKEVVATPKALKKALEHEKTPELAAKLAAEAIERDPWAAQVSQLSLPKLVEQVALNAWKEQNGNAVCLHLRSTQRHLNSSGAQQKLAQALSDLTGTTVELTIVEDDNPAVRTPLEWRQAIYEEKLAQARESIIADNNIQTLRRFFDAELDEESIRPI.

Residue 45–52 (GTRGVGKT) participates in ATP binding. Cys64, Cys73, Cys76, and Cys79 together coordinate Zn(2+). The interval 385–441 (TPPQLQQPSAPAPQTSPAPLPASTSQVLAARNQLQRAQGVTKTKKSEPAAASRARPV) is disordered. Over residues 394–404 (APAPQTSPAPL) the composition is skewed to pro residues. Residues 416 to 425 (NQLQRAQGVT) are compositionally biased toward polar residues.

This sequence belongs to the DnaX/STICHEL family. As to quaternary structure, the DNA polymerase holoenzyme is a complex that contains 10 different types of subunits. These subunits are organized into 3 functionally essential subassemblies: the pol III core, the beta sliding clamp processivity factor and the clamp-loading complex. The pol III core (subunits alpha, epsilon and theta) contains the polymerase and the 3'-5' exonuclease proofreading activities. The polymerase is tethered to the template via the sliding clamp processivity factor. The clamp-loading complex assembles the beta processivity factor onto the primer template and plays a central role in the organization and communication at the replication fork. This complex contains delta, delta', psi and chi, and copies of either or both of two different DnaX proteins, gamma and tau. The composition of the holoenzyme is, therefore: (alpha,epsilon,theta)[2]-(isoform:gamma/tau)[3]-delta,delta', psi,chi-beta[4].

It catalyses the reaction DNA(n) + a 2'-deoxyribonucleoside 5'-triphosphate = DNA(n+1) + diphosphate. Its function is as follows. DNA polymerase III is a complex, multichain enzyme responsible for most of the replicative synthesis in bacteria. This DNA polymerase also exhibits 3' to 5' exonuclease activity. Serves as a scaffold to help in the dimerization of the core complex. Functionally, seems to interact with the delta subunit to transfer the beta subunit on the DNA. This Salmonella typhimurium (strain LT2 / SGSC1412 / ATCC 700720) protein is DNA polymerase III subunit tau (dnaX).